We begin with the raw amino-acid sequence, 369 residues long: Phenylalanine--tRNA ligase alpha subunit (369 aa).

Mg(2+) is bound at residue Glu269.

It belongs to the class-II aminoacyl-tRNA synthetase family. Phe-tRNA synthetase alpha subunit type 1 subfamily. Tetramer of two alpha and two beta subunits. Requires Mg(2+) as cofactor.

Its subcellular location is the cytoplasm. It carries out the reaction tRNA(Phe) + L-phenylalanine + ATP = L-phenylalanyl-tRNA(Phe) + AMP + diphosphate + H(+). This chain is Phenylalanine--tRNA ligase alpha subunit, found in Brucella abortus (strain 2308).